A 179-amino-acid chain; its full sequence is Monothiol glutaredoxin-S12, chloroplastic (179 aa).

The N-terminal 61 residues, 1-61 (MVAATVNLAN…WPPLRCSSVK (61 aa)), are a transit peptide targeting the chloroplast. Alanine 62 carries the post-translational modification N-acetylalanine. A Glutaredoxin domain is found at 75–176 (EETVKTTVAE…AILAEANGKN (102 aa)). [2Fe-2S] cluster is bound at residue cysteine 95.

Belongs to the glutaredoxin family. CPYC subfamily.

It localises to the plastid. Its subcellular location is the chloroplast. Functionally, may only reduce GSH-thiol disulfides, but not protein disulfides. In Arabidopsis thaliana (Mouse-ear cress), this protein is Monothiol glutaredoxin-S12, chloroplastic (GRXS12).